We begin with the raw amino-acid sequence, 469 residues long: Neuraminidase (469 aa).

Topologically, residues 1-9 (MNPNQKIIT) are intravirion. A helical transmembrane segment spans residues 10 to 30 (IGSVSLTIATICFLMQIAILV). Residues 11 to 33 (GSVSLTIATICFLMQIAILVTTV) form an involved in apical transport and lipid raft association region. Over 31-469 (TTVTLHFKQY…DGADINLMPI (439 aa)) the chain is Virion surface. The tract at residues 36–88 (HFKQYECSSPPNNQVMPCEPIIIERNITEIVYLTNTTIEKEICPKLVEYRNWS) is hypervariable stalk region. 3 N-linked (GlcNAc...) asparagine; by host glycosylation sites follow: N61, N70, and N86. The segment at 91-469 (QCKITGFAPF…DGADINLMPI (379 aa)) is head of neuraminidase. Cystine bridges form between C92–C417, C124–C129, C183–C230, C232–C237, C278–C291, C280–C289, C318–C337, and C421–C447. R118 contacts substrate. Residue N146 is glycosylated (N-linked (GlcNAc...) asparagine; by host). The active-site Proton donor/acceptor is the D151. R152 provides a ligand contact to substrate. N-linked (GlcNAc...) asparagine; by host glycans are attached at residues N200 and N234. Residue 276 to 277 (EE) coordinates substrate. Residue R292 participates in substrate binding. 3 residues coordinate Ca(2+): D293, G297, and D324. R371 lines the substrate pocket. N402 carries N-linked (GlcNAc...) asparagine; by host glycosylation. Y406 (nucleophile) is an active-site residue.

This sequence belongs to the glycosyl hydrolase 34 family. In terms of assembly, homotetramer. It depends on Ca(2+) as a cofactor. Post-translationally, N-glycosylated.

It localises to the virion membrane. Its subcellular location is the host apical cell membrane. The catalysed reaction is Hydrolysis of alpha-(2-&gt;3)-, alpha-(2-&gt;6)-, alpha-(2-&gt;8)- glycosidic linkages of terminal sialic acid residues in oligosaccharides, glycoproteins, glycolipids, colominic acid and synthetic substrates.. Inhibited by the neuraminidase inhibitors zanamivir (Relenza) and oseltamivir (Tamiflu). These drugs interfere with the release of progeny virus from infected cells and are effective against all influenza strains. Resistance to neuraminidase inhibitors is quite rare. Its function is as follows. Catalyzes the removal of terminal sialic acid residues from viral and cellular glycoconjugates. Cleaves off the terminal sialic acids on the glycosylated HA during virus budding to facilitate virus release. Additionally helps virus spread through the circulation by further removing sialic acids from the cell surface. These cleavages prevent self-aggregation and ensure the efficient spread of the progeny virus from cell to cell. Otherwise, infection would be limited to one round of replication. Described as a receptor-destroying enzyme because it cleaves a terminal sialic acid from the cellular receptors. May facilitate viral invasion of the upper airways by cleaving the sialic acid moieties on the mucin of the airway epithelial cells. Likely to plays a role in the budding process through its association with lipid rafts during intracellular transport. May additionally display a raft-association independent effect on budding. Plays a role in the determination of host range restriction on replication and virulence. Sialidase activity in late endosome/lysosome traffic seems to enhance virus replication. The polypeptide is Neuraminidase (Influenza A virus (strain A/Hong Kong/5/1983 H3N2)).